Here is a 297-residue protein sequence, read N- to C-terminus: Phosphoribosylaminoimidazole-succinocarboxamide synthase (297 aa).

The protein belongs to the SAICAR synthetase family.

It catalyses the reaction 5-amino-1-(5-phospho-D-ribosyl)imidazole-4-carboxylate + L-aspartate + ATP = (2S)-2-[5-amino-1-(5-phospho-beta-D-ribosyl)imidazole-4-carboxamido]succinate + ADP + phosphate + 2 H(+). It participates in purine metabolism; IMP biosynthesis via de novo pathway; 5-amino-1-(5-phospho-D-ribosyl)imidazole-4-carboxamide from 5-amino-1-(5-phospho-D-ribosyl)imidazole-4-carboxylate: step 1/2. The protein is Phosphoribosylaminoimidazole-succinocarboxamide synthase of Saccharopolyspora erythraea (strain ATCC 11635 / DSM 40517 / JCM 4748 / NBRC 13426 / NCIMB 8594 / NRRL 2338).